The sequence spans 122 residues: MIQTESTLRVADNTGAREIQCIKVIGAGQKQYANVGDVIVGTIKEATPGGVVKRGQVVRAVIVRTKRGIKRPDGSYIRFDENACVIIDENKDPRGTRIFGPVTRELREKKYMKIISLAPEVL.

The protein belongs to the universal ribosomal protein uL14 family. As to quaternary structure, part of the 50S ribosomal subunit. Forms a cluster with proteins L3 and L19. In the 70S ribosome, L14 and L19 interact and together make contacts with the 16S rRNA in bridges B5 and B8.

Functionally, binds to 23S rRNA. Forms part of two intersubunit bridges in the 70S ribosome. The protein is Large ribosomal subunit protein uL14 of Natranaerobius thermophilus (strain ATCC BAA-1301 / DSM 18059 / JW/NM-WN-LF).